A 760-amino-acid polypeptide reads, in one-letter code: uncharacterized protein (760 aa).

The segment covering 578-587 (RNRKQSKLRI) has biased composition (basic residues). Residues 578-604 (RNRKQSKLRISKQQEIQPQKEESVKKE) are disordered. Positions 595-604 (PQKEESVKKE) are enriched in basic and acidic residues.

The protein localises to the mitochondrion. This is an uncharacterized protein from Dictyostelium citrinum (Slime mold).